The primary structure comprises 803 residues: Protein translocase subunit SecA (803 aa).

Residues Q100, 118–122, and D508 each bind ATP; that span reads GEGKT.

Belongs to the SecA family. As to quaternary structure, monomer and homodimer. Part of the essential Sec protein translocation apparatus which comprises SecA, SecYEG and auxiliary proteins SecDF. Other proteins may also be involved.

It localises to the cell membrane. Its subcellular location is the cytoplasm. It carries out the reaction ATP + H2O + cellular proteinSide 1 = ADP + phosphate + cellular proteinSide 2.. Part of the Sec protein translocase complex. Interacts with the SecYEG preprotein conducting channel. Has a central role in coupling the hydrolysis of ATP to the transfer of proteins into and across the cell membrane, serving as an ATP-driven molecular motor driving the stepwise translocation of polypeptide chains across the membrane. This chain is Protein translocase subunit SecA, found in Leuconostoc mesenteroides subsp. mesenteroides (strain ATCC 8293 / DSM 20343 / BCRC 11652 / CCM 1803 / JCM 6124 / NCDO 523 / NBRC 100496 / NCIMB 8023 / NCTC 12954 / NRRL B-1118 / 37Y).